The sequence spans 336 residues: Ornithine carbamoyltransferase, catabolic (336 aa).

Carbamoyl phosphate is bound by residues 57–60, Q84, R108, and 136–139; these read STRT and HPTQ. L-ornithine contacts are provided by residues N169, D233, and 237 to 238; that span reads SM. Carbamoyl phosphate is bound by residues 275 to 276 and R322; that span reads CL.

Belongs to the aspartate/ornithine carbamoyltransferase superfamily. OTCase family.

The protein localises to the cytoplasm. The catalysed reaction is carbamoyl phosphate + L-ornithine = L-citrulline + phosphate + H(+). It functions in the pathway amino-acid degradation; L-arginine degradation via ADI pathway; carbamoyl phosphate from L-arginine: step 2/2. Reversibly catalyzes the transfer of the carbamoyl group from carbamoyl phosphate (CP) to the N(epsilon) atom of ornithine (ORN) to produce L-citrulline. This Chromobacterium violaceum (strain ATCC 12472 / DSM 30191 / JCM 1249 / CCUG 213 / NBRC 12614 / NCIMB 9131 / NCTC 9757 / MK) protein is Ornithine carbamoyltransferase, catabolic.